Reading from the N-terminus, the 173-residue chain is Ribosome maturation factor RimM (173 aa).

The 73-residue stretch at 98 to 170 (EDEYYWCDLL…RMTVSLPEGL (73 aa)) folds into the PRC barrel domain.

The protein belongs to the RimM family. As to quaternary structure, binds ribosomal protein uS19.

Its subcellular location is the cytoplasm. In terms of biological role, an accessory protein needed during the final step in the assembly of 30S ribosomal subunit, possibly for assembly of the head region. Essential for efficient processing of 16S rRNA. May be needed both before and after RbfA during the maturation of 16S rRNA. It has affinity for free ribosomal 30S subunits but not for 70S ribosomes. This chain is Ribosome maturation factor RimM, found in Geotalea uraniireducens (strain Rf4) (Geobacter uraniireducens).